The chain runs to 328 residues: PLASTID TRANSCRIPTIONALLY ACTIVE protein 6, chloroplastic (328 aa).

The segment covering 1–14 has biased composition (low complexity); that stretch reads MASSAASPSLSLLS. The segment at 1 to 21 is disordered; it reads MASSAASPSLSLLSFTSKPPY. Residues 1-59 constitute a chloroplast transit peptide; it reads MASSAASPSLSLLSFTSKPPYPSGSQRLFASFRTDGLFAPLTLKSRRGRGIVVKVDDVD. The Nuclear localization signal motif lies at 267–275; the sequence is RKRDRKDDL. The RNA binding domain motif lies at 301–319; that stretch reads EREEWTKTREDMEKHLRKL.

In terms of assembly, subunit of the plastid-encoded RNA polymerase (PEP) complex. Component of a large nuclear subcomplex that may include other PEP subunits (e.g. PTAC12/HMR/PAP5, PTAC14/PAP7 and PTAC7/PAP12). Binds directly to PTAC12/HMR/PAP5 in the nucleus. Interacts with MTERF5. As to expression, mostly expressed in rosette leaves, stems and flowers, and, to a lower extent, in roots and cauline leaves.

The protein resides in the plastid. Its subcellular location is the chloroplast. It localises to the chloroplast thylakoid. It is found in the nucleus. The protein localises to the nucleoplasm. In terms of biological role, essential protein involved in plastid gene expression and in chloroplast biogenesis. Links photomorphogenesis and chloroplast biogenesis through its dual localization; required for the formation of late photobodies in the nucleus, as well as for phytochrome B-mediated signaling cascade and subsequent reshaping of the plastid-encoded RNA polymerase (PEP) activity. Binds RNA via specific recognition motifs of viral origin. Recruited by MTERF5 to the transcriptionally paused region of psbEFLJ. Promotes leaf greening. This is PLASTID TRANSCRIPTIONALLY ACTIVE protein 6, chloroplastic from Arabidopsis thaliana (Mouse-ear cress).